Here is a 146-residue protein sequence, read N- to C-terminus: Snaclec 4 (146 aa).

The first 23 residues, 1 to 23 (MGRFISISFGLLVVFLSLSGTEA), serve as a signal peptide directing secretion. 3 disulfide bridges follow: Cys27–Cys38, Cys55–Cys144, and Cys121–Cys136. A C-type lectin domain is found at 34-145 (YDQNCYKVFT…CNFIAPVVCK (112 aa)).

The protein belongs to the snaclec family. Heterodimer; disulfide-linked.

The protein localises to the secreted. Functionally, interferes with one step of hemostasis (modulation of platelet aggregation, or coagulation cascade, for example). The protein is Snaclec 4 of Daboia siamensis (Eastern Russel's viper).